Here is a 429-residue protein sequence, read N- to C-terminus: Histidine--tRNA ligase (429 aa).

The protein belongs to the class-II aminoacyl-tRNA synthetase family. Homodimer.

The protein resides in the cytoplasm. The catalysed reaction is tRNA(His) + L-histidine + ATP = L-histidyl-tRNA(His) + AMP + diphosphate + H(+). The chain is Histidine--tRNA ligase from Pelodictyon phaeoclathratiforme (strain DSM 5477 / BU-1).